Reading from the N-terminus, the 62-residue chain is MEREGKEDVRKADHKIVYGIERVRHGINNFFDDVGKAVKSESDTADSKRSAEAKADEAPAKM.

Residues 38 to 62 form a disordered region; it reads VKSESDTADSKRSAEAKADEAPAKM.

This is an uncharacterized protein from Schizosaccharomyces pombe (strain 972 / ATCC 24843) (Fission yeast).